A 401-amino-acid polypeptide reads, in one-letter code: ATP-dependent RNA helicase eIF4A (401 aa).

Positions 28–56 (DNFDDMKLKGELLRGIYAYGFERPSAIQQ) match the Q motif motif. The 171-residue stretch at 59 to 229 (IMPIVTGRDC…KKFMRDPIRI (171 aa)) folds into the Helicase ATP-binding domain. 72 to 79 (AQSGTGKT) lines the ATP pocket. The short motif at 177-180 (DEAD) is the DEAD box element. The 162-residue stretch at 240 to 401 (GIRQFYINVE…EMPLNVADLI (162 aa)) folds into the Helicase C-terminal domain.

The protein belongs to the DEAD box helicase family. eIF4A subfamily. Component of the eIF4F complex, which composition varies with external and internal environmental conditions. It is composed of at least eIF4A, eIF4E and eIF4G.

It is found in the cytoplasm. The enzyme catalyses ATP + H2O = ADP + phosphate + H(+). ATP-dependent RNA helicase which is a subunit of the eIF4F complex involved in cap recognition and is required for mRNA binding to ribosome. In the current model of translation initiation, eIF4A unwinds RNA secondary structures in the 5'-UTR of mRNAs which is necessary to allow efficient binding of the small ribosomal subunit, and subsequent scanning for the initiator codon. The protein is ATP-dependent RNA helicase eIF4A (TIF1) of Cryptococcus neoformans var. neoformans serotype D (strain B-3501A) (Filobasidiella neoformans).